Here is a 327-residue protein sequence, read N- to C-terminus: Quinone oxidoreductase 1 (327 aa).

NADP(+)-binding positions include 42-46 (FIDTY), Tyr130, 152-153 (GV), 173-177 (GTAQK), Tyr192, Ser216, 238-241 (FGNS), 264-266 (PSL), and Arg317.

This sequence belongs to the zinc-containing alcohol dehydrogenase family. Quinone oxidoreductase subfamily. In terms of assembly, homodimer.

The enzyme catalyses 2 a quinone + NADPH + H(+) = 2 a 1,4-benzosemiquinone + NADP(+). This chain is Quinone oxidoreductase 1 (qorA), found in Escherichia coli (strain K12).